A 360-amino-acid polypeptide reads, in one-letter code: Magnesium transporter NIPA2 (360 aa).

The Extracellular segment spans residues 1–9; the sequence is MSQGRGKYD. The helical transmembrane segment at 10–30 threads the bilayer; sequence FYIGLGLAMSSSIFIGGSFIL. At 31–56 the chain is on the cytoplasmic side; the sequence is KKKGLLRLARKGSMRAGQGGHAYLKE. Residues 57–77 traverse the membrane as a helical segment; sequence WLWWAGLLSMGAGEVANFAAY. A topological domain (extracellular) is located at residue Ala78. The chain crosses the membrane as a helical span at residues 79–99; the sequence is FAPATLVTPLGALSVLVSAIL. Over 100–107 the chain is Cytoplasmic; the sequence is SSYFLNER. Residues 108–128 traverse the membrane as a helical segment; that stretch reads LNLHGKIGCLLSILGSTVMVI. Residues 129–149 are Extracellular-facing; the sequence is HAPKEEEIETLNEMSHKLGDP. A helical transmembrane segment spans residues 150–170; sequence GFVVFATLVVIVALILIFVVG. Residues 171-175 are Cytoplasmic-facing; the sequence is PRHGQ. Residues 176–196 traverse the membrane as a helical segment; that stretch reads TNILVYITICSVIGAFSVSCV. Residues 197-215 lie on the Extracellular side of the membrane; it reads KGLGIAIKELFAGKPVLRH. Residues 216–236 form a helical membrane-spanning segment; the sequence is PLAWILLLSLIVCVSTQINYL. Over 237–246 the chain is Cytoplasmic; the sequence is NRALDIFNTS. Residues 247 to 267 traverse the membrane as a helical segment; that stretch reads IVTPIYYVFFTTSVLTCSAIL. The Extracellular portion of the chain corresponds to 268-278; the sequence is FKEWQDMPVDD. A helical transmembrane segment spans residues 279 to 299; sequence VIGTLSGFFTIIVGIFLLHAF. At 300–360 the chain is on the cytoplasmic side; it reads KDVSFSLASL…SRRNGNLTAF (61 aa).

The protein belongs to the NIPA family. In terms of tissue distribution, widely expressed.

The protein localises to the cell membrane. It is found in the early endosome. It carries out the reaction Mg(2+)(in) = Mg(2+)(out). Its function is as follows. Acts as a selective Mg(2+) transporter. The protein is Magnesium transporter NIPA2 (NIPA2) of Homo sapiens (Human).